A 710-amino-acid polypeptide reads, in one-letter code: Conserved oligomeric Golgi complex subunit 2 (710 aa).

The protein belongs to the COG2 family. Component of the conserved oligomeric Golgi complex which is composed of eight different subunits and is required for normal Golgi morphology and localization.

It is found in the golgi apparatus membrane. Functionally, required for normal Golgi morphology and function. In Drosophila melanogaster (Fruit fly), this protein is Conserved oligomeric Golgi complex subunit 2.